A 360-amino-acid chain; its full sequence is Peptide chain release factor 1 (360 aa).

Residue Q237 is modified to N5-methylglutamine.

The protein belongs to the prokaryotic/mitochondrial release factor family. Methylated by PrmC. Methylation increases the termination efficiency of RF1.

It localises to the cytoplasm. Peptide chain release factor 1 directs the termination of translation in response to the peptide chain termination codons UAG and UAA. This is Peptide chain release factor 1 from Pseudomonas putida (strain ATCC 47054 / DSM 6125 / CFBP 8728 / NCIMB 11950 / KT2440).